A 475-amino-acid chain; its full sequence is MSPKTETKASVGFKAGVKDYRLTYYTPEYQTKDTDILAAFRVTPQPGVPPEEAGAAVAAESSTGTWTTVWTDGLTSLDRYKGRCYDIEPVPGEETQFIAYVAYPLDLFEEGSVTNLFTSIVGNVFGFKALRALRLEDLRIPPSYSKTFQGPPHGIQVERDKLNKYGRPLLGCTIKPKLGLSAKNYGRAVYECLRGGLDFTKDDENVNSQPFMRWRDRFVFCAEAINKAQAETGEIKGHYLNATAGTCEEMIKRAVFARELGVPIVMHDYLTGGFTANTSLAHYCRDNGLLLHIHRAMHAVIDRQRNHGMHFRVLAKALRMSGGDHIHAGTVVGKLEGERDVTLGFVDLLRDDFIEKDRSRGIYFTQDWVSMPGVMPVASGGIHVWHMPALTEIFGDDSVLQFGGGTLGHPWGNAPGAVANRVALEACVQARNEGRDLAREGNEVIREACKWSPELAAACEIWKEIKFEFDVIDRL.

Residues 1 to 2 constitute a propeptide that is removed on maturation; sequence MS. Position 3 is an N-acetylproline (Pro-3). Lys-14 is modified (N6,N6,N6-trimethyllysine). The substrate site is built by Asn-123 and Thr-173. Catalysis depends on Lys-175, which acts as the Proton acceptor. Substrate is bound at residue Lys-177. Positions 201, 203, and 204 each coordinate Mg(2+). At Lys-201 the chain carries N6-carboxylysine. His-294 (proton acceptor) is an active-site residue. Arg-295, His-327, and Ser-379 together coordinate substrate.

The protein belongs to the RuBisCO large chain family. Type I subfamily. In terms of assembly, heterohexadecamer of 8 large chains and 8 small chains; disulfide-linked. The disulfide link is formed within the large subunit homodimers. It depends on Mg(2+) as a cofactor. In terms of processing, the disulfide bond which can form in the large chain dimeric partners within the hexadecamer appears to be associated with oxidative stress and protein turnover.

Its subcellular location is the plastid. The protein resides in the chloroplast. It carries out the reaction 2 (2R)-3-phosphoglycerate + 2 H(+) = D-ribulose 1,5-bisphosphate + CO2 + H2O. The catalysed reaction is D-ribulose 1,5-bisphosphate + O2 = 2-phosphoglycolate + (2R)-3-phosphoglycerate + 2 H(+). RuBisCO catalyzes two reactions: the carboxylation of D-ribulose 1,5-bisphosphate, the primary event in carbon dioxide fixation, as well as the oxidative fragmentation of the pentose substrate in the photorespiration process. Both reactions occur simultaneously and in competition at the same active site. This is Ribulose bisphosphate carboxylase large chain from Pinus pinea (Italian stone pine).